The chain runs to 364 residues: Cobalt-precorrin-5B C(1)-methyltransferase (364 aa).

The protein belongs to the CbiD family.

It catalyses the reaction Co-precorrin-5B + S-adenosyl-L-methionine = Co-precorrin-6A + S-adenosyl-L-homocysteine. It participates in cofactor biosynthesis; adenosylcobalamin biosynthesis; cob(II)yrinate a,c-diamide from sirohydrochlorin (anaerobic route): step 6/10. In terms of biological role, catalyzes the methylation of C-1 in cobalt-precorrin-5B to form cobalt-precorrin-6A. This is Cobalt-precorrin-5B C(1)-methyltransferase from Pseudomonas putida (strain GB-1).